The primary structure comprises 403 residues: Enoyl-[acyl-carrier-protein] reductase [NADH] (403 aa).

NAD(+)-binding positions include 49–54 (GASSGY), 75–76 (FE), 112–113 (DA), and 141–142 (LA). Residue Y227 participates in substrate binding. The active-site Proton donor is the Y237. NAD(+) is bound by residues K246 and 276-278 (VVT).

Belongs to the TER reductase family. As to quaternary structure, monomer.

The catalysed reaction is a 2,3-saturated acyl-[ACP] + NAD(+) = a (2E)-enoyl-[ACP] + NADH + H(+). The protein operates within lipid metabolism; fatty acid biosynthesis. Functionally, involved in the final reduction of the elongation cycle of fatty acid synthesis (FAS II). Catalyzes the reduction of a carbon-carbon double bond in an enoyl moiety that is covalently linked to an acyl carrier protein (ACP). In Pseudomonas putida (strain GB-1), this protein is Enoyl-[acyl-carrier-protein] reductase [NADH].